Here is a 287-residue protein sequence, read N- to C-terminus: 4-hydroxybenzoate octaprenyltransferase (287 aa).

The next 9 membrane-spanning stretches (helical) occupy residues 21–41, 44–64, 91–111, 112–132, 139–159, 160–180, 211–231, 235–255, and 263–283; these read VGIF…AKGA, FKIA…GCIV, VTEA…LVLL, LNRL…VYPF, LPQL…FAAT, VGHV…WPIV, LMIG…GWYL, YWFY…QFLI, and CFAA…GILL.

The protein belongs to the UbiA prenyltransferase family. Mg(2+) is required as a cofactor.

It is found in the cell inner membrane. The catalysed reaction is all-trans-octaprenyl diphosphate + 4-hydroxybenzoate = 4-hydroxy-3-(all-trans-octaprenyl)benzoate + diphosphate. It functions in the pathway cofactor biosynthesis; ubiquinone biosynthesis. In terms of biological role, catalyzes the prenylation of para-hydroxybenzoate (PHB) with an all-trans polyprenyl group. Mediates the second step in the final reaction sequence of ubiquinone-8 (UQ-8) biosynthesis, which is the condensation of the polyisoprenoid side chain with PHB, generating the first membrane-bound Q intermediate 3-octaprenyl-4-hydroxybenzoate. The polypeptide is 4-hydroxybenzoate octaprenyltransferase (Coxiella burnetii (strain CbuK_Q154) (Coxiella burnetii (strain Q154))).